Consider the following 1148-residue polypeptide: Transcription-repair-coupling factor (1148 aa).

Residues 615 to 776 (DMCQPLAMDR…MSGMRDLSII (162 aa)) form the Helicase ATP-binding domain. 628–635 (GDVGFGKT) lines the ATP pocket. Positions 729 to 732 (DEEH) match the DEEH box motif. Residues 798–951 (VREAILREIL…GFALATHDLE (154 aa)) form the Helicase C-terminal domain.

This sequence in the N-terminal section; belongs to the UvrB family. It in the C-terminal section; belongs to the helicase family. RecG subfamily. As to quaternary structure, monomer. Interacts with UvrA and RNAP.

It is found in the cytoplasm. Functionally, couples transcription and DNA repair by recognizing RNA polymerase (RNAP) stalled at DNA lesions. Mediates ATP-dependent release of RNAP and its truncated transcript from the DNA, and recruitment of nucleotide excision repair machinery to the damaged site. Can also dissociate RNAP that is blocked by low concentration of nucleoside triphosphates or by physical obstruction, such as bound proteins. In addition, can rescue arrested complexes by promoting forward translocation. Has ATPase activity, which is required for removal of stalled RNAP, but seems to lack helicase activity. May act through a translocase activity that rewinds upstream DNA, leading either to translocation or to release of RNAP when the enzyme active site cannot continue elongation. This chain is Transcription-repair-coupling factor, found in Escherichia coli (strain K12).